The chain runs to 206 residues: Small ribosomal subunit protein uS4 (206 aa).

Positions 96 to 157 (CRLDNVVYRM…KCRNQLRIAQ (62 aa)) constitute an S4 RNA-binding domain.

It belongs to the universal ribosomal protein uS4 family. In terms of assembly, part of the 30S ribosomal subunit. Contacts protein S5. The interaction surface between S4 and S5 is involved in control of translational fidelity.

One of the primary rRNA binding proteins, it binds directly to 16S rRNA where it nucleates assembly of the body of the 30S subunit. Functionally, with S5 and S12 plays an important role in translational accuracy. The sequence is that of Small ribosomal subunit protein uS4 from Stutzerimonas stutzeri (strain A1501) (Pseudomonas stutzeri).